A 312-amino-acid polypeptide reads, in one-letter code: tRNA pseudouridine synthase B (312 aa).

Catalysis depends on D37, which acts as the Nucleophile.

Belongs to the pseudouridine synthase TruB family. Type 1 subfamily.

The enzyme catalyses uridine(55) in tRNA = pseudouridine(55) in tRNA. Functionally, responsible for synthesis of pseudouridine from uracil-55 in the psi GC loop of transfer RNAs. The sequence is that of tRNA pseudouridine synthase B from Thermus thermophilus (strain ATCC BAA-163 / DSM 7039 / HB27).